The primary structure comprises 354 residues: Homer protein homolog 2 (354 aa).

In terms of domain architecture, WH1 spans 1-110 (MGEQPIFTTR…EKFQEVKEAA (110 aa)). Residues 92 to 122 (SEQQLTKFAEKFQEVKEAAKIAKDKTQEKIE) adopt a coiled-coil conformation. The span at 112 to 122 (IAKDKTQEKIE) shows a compositional bias: basic and acidic residues. The segment at 112-166 (IAKDKTQEKIETSSNHSQESGRETPSSTQASSVNGTDDEKASHAGPANTHLKSEN) is disordered. The span at 123–146 (TSSNHSQESGRETPSSTQASSVNG) shows a compositional bias: polar residues. Positions 160-329 (THLKSENDKL…RHLKVELKSF (170 aa)) form a coiled coil.

Belongs to the Homer family. As to quaternary structure, forms coiled-coil structures that mediate homo- and heteromultimerization. Interacts with NFATC2; interaction is reduced by AKT activation. Interacts with NFATC1 and NFATC4. Interacts with DAGLA (via PPXXF motif); this interaction is required for the cell membrane localization of DAGLA.

It localises to the cytoplasm. The protein resides in the cell membrane. Its subcellular location is the postsynaptic density. The protein localises to the synapse. It is found in the cell projection. It localises to the stereocilium. Functionally, postsynaptic density scaffolding protein. Binds and cross-links cytoplasmic regions of GRM1, GRM5, ITPR1, DNM3, RYR1, RYR2, SHANK1 and SHANK3. By physically linking GRM1 and GRM5 with ER-associated ITPR1 receptors, it aids the coupling of surface receptors to intracellular calcium release. May also couple GRM1 to PI3 kinase through its interaction with AGAP2. Isoforms can be differently regulated and may play an important role in maintaining the plasticity at glutamatergic synapses. Required for normal hearing. Negatively regulates T cell activation by inhibiting the calcineurin-NFAT pathway. Acts by competing with calcineurin/PPP3CA for NFAT protein binding, hence preventing NFAT activation by PPP3CA. The sequence is that of Homer protein homolog 2 from Homo sapiens (Human).